Reading from the N-terminus, the 592-residue chain is Aspartate--tRNA(Asp/Asn) ligase (592 aa).

E182 is a binding site for L-aspartate. Residues 206–209 (QIFK) are aspartate. Residue R228 participates in L-aspartate binding. Residues 228-230 (RDE) and Q237 contribute to the ATP site. An L-aspartate-binding site is contributed by H455. ATP is bound at residue E489. R496 contacts L-aspartate. 541–544 (GLDR) is an ATP binding site.

Belongs to the class-II aminoacyl-tRNA synthetase family. Type 1 subfamily. In terms of assembly, homodimer.

The protein localises to the cytoplasm. The enzyme catalyses tRNA(Asx) + L-aspartate + ATP = L-aspartyl-tRNA(Asx) + AMP + diphosphate. Functionally, aspartyl-tRNA synthetase with relaxed tRNA specificity since it is able to aspartylate not only its cognate tRNA(Asp) but also tRNA(Asn). Reaction proceeds in two steps: L-aspartate is first activated by ATP to form Asp-AMP and then transferred to the acceptor end of tRNA(Asp/Asn). The chain is Aspartate--tRNA(Asp/Asn) ligase from Thermoanaerobacter pseudethanolicus (strain ATCC 33223 / 39E) (Clostridium thermohydrosulfuricum).